A 205-amino-acid polypeptide reads, in one-letter code: Nitrophorin-4 (205 aa).

The N-terminal stretch at 1–21 (MKSYTSLLAVAILCLFGGVNG) is a signal peptide. Intrachain disulfides connect Cys23-Cys143 and Cys62-Cys192. Heme is bound at residue His80.

It belongs to the calycin superfamily. Nitrophorin family. Heme b serves as cofactor. In terms of tissue distribution, salivary gland (at protein level).

It is found in the secreted. The catalysed reaction is 3 nitrite + 2 H(+) = 2 nitric oxide + nitrate + H2O. In terms of biological role, heme-based protein that delivers nitric oxide gas (NO) to the victim while feeding, resulting in vasodilation and inhibition of platelet aggregation. Reversibly binds nitric oxide (NO). Also binds tightly to histamine, which is released by the host to induce wound healing. NO release is pH dependent and linked to loop dynamics. The protein is Nitrophorin-4 of Rhodnius prolixus (Triatomid bug).